Reading from the N-terminus, the 348-residue chain is Glucan endo-1,3-beta-glucosidase, basic isoform (348 aa).

Pyrrolidone carboxylic acid is present on Q1. E95 (proton donor) is an active-site residue. Catalysis depends on E240, which acts as the Nucleophile. A propeptide spans 317-348 (AQRMQRLLLMSSMQHIPLRVTCKLEPSSQSLL) (removed in mature form).

The protein belongs to the glycosyl hydrolase 17 family.

It localises to the vacuole. The catalysed reaction is Hydrolysis of (1-&gt;3)-beta-D-glucosidic linkages in (1-&gt;3)-beta-D-glucans.. Implicated in the defense of plants against pathogens. In Phaseolus vulgaris (Kidney bean), this protein is Glucan endo-1,3-beta-glucosidase, basic isoform.